The sequence spans 66 residues: Large ribosomal subunit protein bL35 (66 aa).

Residues 1 to 23 (MPKMKTHRASAKRFKRTANGGLK) form a disordered region.

Belongs to the bacterial ribosomal protein bL35 family.

This chain is Large ribosomal subunit protein bL35, found in Lactobacillus helveticus (strain DPC 4571).